Here is a 164-residue protein sequence, read N- to C-terminus: uncharacterized protein (164 aa).

Positions 1–77 (MGQKKTMGTE…PCSIRDAPFH (77 aa)) are disordered.

This is an uncharacterized protein from Homo sapiens (Human).